The following is a 316-amino-acid chain: Dof zinc finger protein DOF5.7 (316 aa).

The interval 1 to 42 (MSSHTNLPSPKPVPKPDHRISGTSQTKKPPSSSVAQDQQNLK) is disordered. Over residues 21–42 (SGTSQTKKPPSSSVAQDQQNLK) the composition is skewed to polar residues. The segment at 41–95 (LKCPRCNSPNTKFCYYNNYSLSQPRHFCKSCRRYWTRGGALRNVPIGGGCRKTKK) adopts a Dof-type zinc-finger fold. Zn(2+) contacts are provided by C43, C46, C68, and C71. 2 disordered regions span residues 92 to 111 (KTKK…SSSS) and 257 to 294 (NSSS…NTGG). The span at 101 to 111 (SSMNTLPSSSS) shows a compositional bias: low complexity. Residues 257-291 (NSSSPSSPTKKGDNQTEWYFGNNSDNEGVISNNAN) are compositionally biased toward polar residues.

Its subcellular location is the nucleus. In terms of biological role, transcription factor that binds specifically to a 5'-AA[AG]G-3' consensus core sequence. The protein is Dof zinc finger protein DOF5.7 (DOF5.7) of Arabidopsis thaliana (Mouse-ear cress).